The following is a 443-amino-acid chain: Sperm-associated antigen 4 protein (443 aa).

Low complexity predominate over residues 1 to 36 (MRRSPRSGSAASSHNHTPNFYSENSNSSHSATSGDS). A disordered region spans residues 1 to 107 (MRRSPRSGSA…VRGGASEPSG (107 aa)). The next 2 helical transmembrane spans lie at 137-157 (FLSL…DGLV) and 168-188 (FLFT…WGLL). The stretch at 203–244 (TLSQYHHRVHSQGQQLQQLQAELNKLHKEVSSVRAAHSERVA) forms a coiled coil. In terms of domain architecture, SUN spans 267 to 427 (GASIDLEKTS…YRVRAHGVRT (161 aa)).

Self-associates. Interacts with ODF1. May associate with microtubules. Interacts with SUN3 and SYNE1; suggesting the formation of a spermatogenesis-specific LINC complex; a SUN domain-based heterotrimer of SPAG4 and SUN3 may associate with SYNE1. Interacts with SEPT12 and LMNB1; during spermatogenesis. Isoform 1 is testis specific and is exclusively expressed in spermatids.

The protein resides in the membrane. It is found in the cytoplasm. It localises to the cytoskeleton. Its subcellular location is the nucleus envelope. The protein localises to the nucleus inner membrane. The protein resides in the flagellum axoneme. Functionally, involved in spermatogenesis. Required for sperm head formation but not required to establish and maintain general polarity of the sperm head. Required for anchoring and organization of the manchette. Required for targeting of SUN3 and probably SYNE1 through a probable SUN1:SYNE3 LINC complex to the nuclear envelope and involved in accurate posterior sperm head localization of the complex. May anchor SUN3 the nuclear envelope. Involved in maintenance of the nuclear envelope integrity. May assist the organization and assembly of outer dense fibers (ODFs), a specific structure of the sperm tail. This chain is Sperm-associated antigen 4 protein (Spag4), found in Mus musculus (Mouse).